We begin with the raw amino-acid sequence, 510 residues long: Protein ERGIC-53 (510 aa).

An N-terminal signal peptide occupies residues 1–30 (MAGSRQRGLRARVRPLFCALLLSLGRFVRG). At 31–477 (DGVGGDPAVA…ELPPFPSCLS (447 aa)) the chain is on the lumenal side. Residues 44–267 (RRFEYKYSFK…DVLSFLTFQL (224 aa)) enclose the L-type lectin-like domain. Positions 88 and 121 each coordinate a carbohydrate. Ca(2+) is bound by residues Asp152, Phe154, and Asn156. 2 residues coordinate a carbohydrate: Asn156 and His178. A Ca(2+)-binding site is contributed by Asp181. Cysteines 190 and 230 form a disulfide. 251–253 (GGL) contacts a carbohydrate. Residue Ser425 is modified to Phosphoserine. Residues 478–498 (TVHFIIFVVVQTVLFIGYIMY) form a helical membrane-spanning segment. Over 499–510 (RSQQEAAAKKFF) the chain is Cytoplasmic. The interval 499–510 (RSQQEAAAKKFF) is mediates interaction with RAB3GAP1, RAB3GAP2 and UBXN6. Positions 509–510 (FF) match the ER export motif motif.

As to quaternary structure, exists both as a covalent disulfide-linked homohexamer, and a complex of three disulfide-linked dimers non-covalently kept together. Interacts with MCFD2. May interact with TMEM115. Interacts with RAB3GAP1 and RAB3GAP2. Interacts with UBXN6. Interacts with SERPINA1/alpha1-antitrypsin. Interacts with BET1. In terms of processing, the N-terminal may be partly blocked. As to expression, ubiquitous.

It is found in the endoplasmic reticulum-Golgi intermediate compartment membrane. The protein localises to the golgi apparatus membrane. It localises to the endoplasmic reticulum membrane. Functionally, mannose-specific lectin. May recognize sugar residues of glycoproteins, glycolipids, or glycosylphosphatidyl inositol anchors and may be involved in the sorting or recycling of proteins, lipids, or both. The LMAN1-MCFD2 complex forms a specific cargo receptor for the ER-to-Golgi transport of selected proteins. The chain is Protein ERGIC-53 (LMAN1) from Homo sapiens (Human).